The primary structure comprises 261 residues: Cytochrome c oxidase subunit 3 (261 aa).

Residues 1-15 (MTHQTHAYHMVNPSP) lie on the Mitochondrial matrix side of the membrane. A helical membrane pass occupies residues 16–34 (WPLTGALSALLMTSGLIMW). The Mitochondrial intermembrane segment spans residues 35-40 (FHFNSM). The helical transmembrane segment at 41–66 (YLLMLGLTTNTLTMYQWWRDIVREST) threads the bilayer. Residues 67-72 (FQGHHT) are Mitochondrial matrix-facing. The helical transmembrane segment at 73–105 (PIVQKGLRYGMILFIVSEVFFFAGFFWAFYHSS) threads the bilayer. At 106–128 (LAPTPELGGCWPPTGITPLNPME) the chain is on the mitochondrial intermembrane side. A helical transmembrane segment spans residues 129–152 (VPLLNTSVLLASGVSITWAHHSLM). Topologically, residues 153–155 (EGN) are mitochondrial matrix. A helical membrane pass occupies residues 156 to 183 (RKHMLQALFITISLGIYFTLLQASEYYE). The Mitochondrial intermembrane portion of the chain corresponds to 184–190 (TPFTISD). Residues 191-223 (GIYGSTFFMATGFHGLHVIIGSTFLIVCFVRQL) form a helical membrane-spanning segment. At 224 to 232 (KFHFTSNHH) the chain is on the mitochondrial matrix side. The chain crosses the membrane as a helical span at residues 233–256 (FGFEAAAWYWHFVDVVWLFLYVSI). Topologically, residues 257–261 (YWWGS) are mitochondrial intermembrane.

The protein belongs to the cytochrome c oxidase subunit 3 family. As to quaternary structure, component of the cytochrome c oxidase (complex IV, CIV), a multisubunit enzyme composed of 14 subunits. The complex is composed of a catalytic core of 3 subunits MT-CO1, MT-CO2 and MT-CO3, encoded in the mitochondrial DNA, and 11 supernumerary subunits COX4I, COX5A, COX5B, COX6A, COX6B, COX6C, COX7A, COX7B, COX7C, COX8 and NDUFA4, which are encoded in the nuclear genome. The complex exists as a monomer or a dimer and forms supercomplexes (SCs) in the inner mitochondrial membrane with NADH-ubiquinone oxidoreductase (complex I, CI) and ubiquinol-cytochrome c oxidoreductase (cytochrome b-c1 complex, complex III, CIII), resulting in different assemblies (supercomplex SCI(1)III(2)IV(1) and megacomplex MCI(2)III(2)IV(2)).

It is found in the mitochondrion inner membrane. It catalyses the reaction 4 Fe(II)-[cytochrome c] + O2 + 8 H(+)(in) = 4 Fe(III)-[cytochrome c] + 2 H2O + 4 H(+)(out). Functionally, component of the cytochrome c oxidase, the last enzyme in the mitochondrial electron transport chain which drives oxidative phosphorylation. The respiratory chain contains 3 multisubunit complexes succinate dehydrogenase (complex II, CII), ubiquinol-cytochrome c oxidoreductase (cytochrome b-c1 complex, complex III, CIII) and cytochrome c oxidase (complex IV, CIV), that cooperate to transfer electrons derived from NADH and succinate to molecular oxygen, creating an electrochemical gradient over the inner membrane that drives transmembrane transport and the ATP synthase. Cytochrome c oxidase is the component of the respiratory chain that catalyzes the reduction of oxygen to water. Electrons originating from reduced cytochrome c in the intermembrane space (IMS) are transferred via the dinuclear copper A center (CU(A)) of subunit 2 and heme A of subunit 1 to the active site in subunit 1, a binuclear center (BNC) formed by heme A3 and copper B (CU(B)). The BNC reduces molecular oxygen to 2 water molecules using 4 electrons from cytochrome c in the IMS and 4 protons from the mitochondrial matrix. The polypeptide is Cytochrome c oxidase subunit 3 (MT-CO3) (Phoca vitulina (Harbor seal)).